The sequence spans 601 residues: Phosphomethylpyrimidine synthase (601 aa).

Substrate contacts are provided by residues Asn-224, Met-253, Tyr-282, His-318, 338 to 340 (SRG), 379 to 382 (DGLR), and Glu-418. His-422 is a binding site for Zn(2+). Tyr-445 provides a ligand contact to substrate. Residue His-486 participates in Zn(2+) binding. [4Fe-4S] cluster-binding residues include Cys-566, Cys-569, and Cys-574.

This sequence belongs to the ThiC family. Homodimer. [4Fe-4S] cluster is required as a cofactor.

It carries out the reaction 5-amino-1-(5-phospho-beta-D-ribosyl)imidazole + S-adenosyl-L-methionine = 4-amino-2-methyl-5-(phosphooxymethyl)pyrimidine + CO + 5'-deoxyadenosine + formate + L-methionine + 3 H(+). The protein operates within cofactor biosynthesis; thiamine diphosphate biosynthesis. In terms of biological role, catalyzes the synthesis of the hydroxymethylpyrimidine phosphate (HMP-P) moiety of thiamine from aminoimidazole ribotide (AIR) in a radical S-adenosyl-L-methionine (SAM)-dependent reaction. The protein is Phosphomethylpyrimidine synthase of Xylella fastidiosa (strain 9a5c).